The sequence spans 127 residues: Glycine cleavage system H protein (127 aa).

Residues 22-104 form the Lipoyl-binding domain; that stretch reads QVVIGITHFA…YEGAWMVKVE (83 aa). Residue lysine 63 is modified to N6-lipoyllysine.

It belongs to the GcvH family. In terms of assembly, the glycine cleavage system is composed of four proteins: P, T, L and H. The cofactor is (R)-lipoate.

In terms of biological role, the glycine cleavage system catalyzes the degradation of glycine. The H protein shuttles the methylamine group of glycine from the P protein to the T protein. Its function is as follows. Is also involved in protein lipoylation via its role as an octanoyl/lipoyl carrier protein intermediate. The sequence is that of Glycine cleavage system H protein from Bacillus cytotoxicus (strain DSM 22905 / CIP 110041 / 391-98 / NVH 391-98).